We begin with the raw amino-acid sequence, 282 residues long: Probable endonuclease 4 (282 aa).

9 residues coordinate Zn(2+): histidine 66, histidine 106, glutamate 143, aspartate 176, histidine 179, histidine 213, aspartate 226, histidine 228, and glutamate 258.

Belongs to the AP endonuclease 2 family. Zn(2+) serves as cofactor.

It carries out the reaction Endonucleolytic cleavage to 5'-phosphooligonucleotide end-products.. In terms of biological role, endonuclease IV plays a role in DNA repair. It cleaves phosphodiester bonds at apurinic or apyrimidinic (AP) sites, generating a 3'-hydroxyl group and a 5'-terminal sugar phosphate. This is Probable endonuclease 4 from Aquifex aeolicus (strain VF5).